Reading from the N-terminus, the 110-residue chain is uncharacterized protein (110 aa).

This is an uncharacterized protein from Autographa californica nuclear polyhedrosis virus (AcMNPV).